Here is a 387-residue protein sequence, read N- to C-terminus: MNQNIEKRLFTSESVSEGHPDKICDQISDAILDEVLKQDKNAKVACEVFATTNYLLIGGQISSTAIVNYEQVARDVLKKNGYVDDAYGINANTCKIDIKIESQSPDIAQGVELSNDQIGAGDQGIMFGYATNESKTYLPLAITIAHELVYNATSQRKKGLFKWARPDMKSQVTIDYTNINNPKIDTILMSIQHDPNYNETEFKKYIKENIMNLVAKEFNLNTDFKVLINPTGRFVIGGPQGDTGLTGRKIIADTYGGYSRHGGGAFSGKDSTKVDRSAAYMCRYVAKNLVAAGLADKIEIQVSYAIGISQPISIFIETFNTHKVDLNTIYKAVYENFDFSVSSMIKTLDLKKPIFFKTSKYGHFGKKDLPWEKLDKIEVLKEYKKCS.

Residue H19 participates in ATP binding. D21 provides a ligand contact to Mg(2+). E47 is a K(+) binding site. Position 103 (Q103) interacts with L-methionine. Residues 103-113 (QSPDIAQGVEL) form a flexible loop region. ATP contacts are provided by residues 167 to 169 (DMK), 233 to 234 (RF), D242, 248 to 249 (RK), A265, and K269. D242 contributes to the L-methionine binding site. Position 273 (K273) interacts with L-methionine.

Belongs to the AdoMet synthase family. Homotetramer; dimer of dimers. It depends on Mg(2+) as a cofactor. Requires K(+) as cofactor.

It is found in the cytoplasm. The enzyme catalyses L-methionine + ATP + H2O = S-adenosyl-L-methionine + phosphate + diphosphate. It functions in the pathway amino-acid biosynthesis; S-adenosyl-L-methionine biosynthesis; S-adenosyl-L-methionine from L-methionine: step 1/1. In terms of biological role, catalyzes the formation of S-adenosylmethionine (AdoMet) from methionine and ATP. The overall synthetic reaction is composed of two sequential steps, AdoMet formation and the subsequent tripolyphosphate hydrolysis which occurs prior to release of AdoMet from the enzyme. In Mycoplasma mycoides subsp. mycoides SC (strain CCUG 32753 / NCTC 10114 / PG1), this protein is S-adenosylmethionine synthase.